A 238-amino-acid chain; its full sequence is tRNA (guanine-N(7)-)-methyltransferase (238 aa).

S-adenosyl-L-methionine contacts are provided by glutamate 68, glutamate 93, aspartate 120, and aspartate 143. Residue aspartate 143 is part of the active site. Residues lysine 147, aspartate 179, and 216–219 (TKFE) each bind substrate.

It belongs to the class I-like SAM-binding methyltransferase superfamily. TrmB family.

The enzyme catalyses guanosine(46) in tRNA + S-adenosyl-L-methionine = N(7)-methylguanosine(46) in tRNA + S-adenosyl-L-homocysteine. It participates in tRNA modification; N(7)-methylguanine-tRNA biosynthesis. Its function is as follows. Catalyzes the formation of N(7)-methylguanine at position 46 (m7G46) in tRNA. The chain is tRNA (guanine-N(7)-)-methyltransferase from Shewanella frigidimarina (strain NCIMB 400).